The primary structure comprises 333 residues: Isoaspartyl peptidase/L-asparaginase (333 aa).

Residue T191 is the Nucleophile of the active site. Substrate is bound by residues 219–222 (RVGD) and 242–245 (TGHG).

The protein belongs to the Ntn-hydrolase family. As to quaternary structure, heterodimer of an alpha and beta chain produced by autocleavage. This heterodimer may then dimerize in turn, giving rise to a heterotetramer. Post-translationally, cleaved into an alpha and beta chain by autocatalysis; this activates the enzyme. The N-terminal residue of the beta subunit is responsible for the nucleophile hydrolase activity. Present in testis, brain, liver, kidney, heart and skeletal muscle. In brain, specifically present in the astrocytic lineage. Present in sperm (at protein level).

The protein localises to the cytoplasm. The enzyme catalyses L-asparagine + H2O = L-aspartate + NH4(+). It carries out the reaction Cleavage of a beta-linked Asp residue from the N-terminus of a polypeptide.. In terms of biological role, has both L-asparaginase and beta-aspartyl peptidase activity. Is highly active with L-Asp beta-methyl ester. Besides, has catalytic activity toward beta-aspartyl dipeptides and their methyl esters, including beta-L-Asp-L-Phe, beta-L-Asp-L-Phe methyl ester (aspartame), beta-L-Asp-L-Ala, beta-L-Asp-L-Leu and beta-L-Asp-L-Lys. Does not have aspartylglucosaminidase activity and is inactive toward GlcNAc-L-Asn. Likewise, has no activity toward glutamine. May be involved in the production of L-aspartate, which can act as an excitatory neurotransmitter in some brain regions. This chain is Isoaspartyl peptidase/L-asparaginase (Asrgl1), found in Rattus norvegicus (Rat).